The chain runs to 278 residues: Tropomyosin A (278 aa).

Residues 1-270 (IMMAMKLEKE…YRAISGELDT (270 aa)) are a coiled coil. The interval 92–134 (DFEQSSGRLTETSTKLDDASKAAEESERNRKTLETRSISDDER) is disordered. Polar residues predominate over residues 95–104 (QSSGRLTETS). Residues 105–134 (TKLDDASKAAEESERNRKTLETRSISDDER) are compositionally biased toward basic and acidic residues.

The protein belongs to the tropomyosin family. In terms of assembly, homodimer.

In terms of biological role, tropomyosin, in association with the troponin complex, plays a central role in the calcium dependent regulation of muscle contraction. The chain is Tropomyosin A from Echinococcus granulosus (Hydatid tapeworm).